Here is a 431-residue protein sequence, read N- to C-terminus: Protein EARLY STARVATION 1, chloroplastic (431 aa).

The N-terminal 19 residues, 1–19, are a transit peptide targeting the chloroplast; the sequence is MAACSRGLVARPFDLTARG. Disordered stretches follow at residues 65 to 126 and 403 to 431; these read GNKP…DTGI and GVYP…SPLE. Over residues 415–431 the composition is skewed to pro residues; it reads PAPPSDDPPGMPPSPLE.

The protein belongs to the ESV1 family.

It is found in the plastid. Its subcellular location is the chloroplast stroma. Its function is as follows. Binds preferentially to highly ordered alpha-glucans, such as starch and crystalline maltodextrins. Involved in the organization of the starch granule matrix, thus influencing starch turnover by modulating the accessibility of starch polymers to modifying and degrading enzymes. Required for the control of starch degradation in leaves and starch distribution in nonphotosynthetic parts. Promotes gravitropic responses, negative in shoots but positive in roots, by facilitating starch granules (statoliths) formation in hypocotyls and roots columella. Facilitates tight packing of starch granules in grains. The sequence is that of Protein EARLY STARVATION 1, chloroplastic from Oryza sativa subsp. indica (Rice).